Here is a 379-residue protein sequence, read N- to C-terminus: Flagellin A (379 aa).

2 coiled-coil regions span residues 103-128 (TNSA…RIAE) and 302-341 (YVDS…IKDT).

The protein belongs to the bacterial flagellin family. In terms of assembly, heteromer of multiple flagellin subunits including FlaA, FlaB, FlaC, FlaD and possibly FlaE.

The protein localises to the secreted. It localises to the bacterial flagellum. Its function is as follows. Flagellin is the subunit protein which polymerizes to form the filaments of bacterial flagella. FlaA is essential for flagellar synthesis and full motility. Important for virulence at two different levels: is needed for crossing the fish integument and may play a role once the bacterium has entered the host. The sequence is that of Flagellin A (flaA) from Vibrio anguillarum (Listonella anguillarum).